A 447-amino-acid chain; its full sequence is Ribosomal protein uS12 methylthiotransferase RimO (447 aa).

Residues 10–120 enclose the MTTase N-terminal domain; it reads PKVGFVSLGC…VVNAVHDVVP (111 aa). The [4Fe-4S] cluster site is built by C19, C55, C84, C153, C157, and C160. The Radical SAM core domain occupies 139 to 377; it reads LTPRHYAYLK…MAHQQAISAA (239 aa). Residues 380 to 447 form the TRAM domain; it reads QMKIGKEIEV…DEYDLWAEML (68 aa).

Belongs to the methylthiotransferase family. RimO subfamily. Requires [4Fe-4S] cluster as cofactor.

The protein resides in the cytoplasm. It carries out the reaction L-aspartate(89)-[ribosomal protein uS12]-hydrogen + (sulfur carrier)-SH + AH2 + 2 S-adenosyl-L-methionine = 3-methylsulfanyl-L-aspartate(89)-[ribosomal protein uS12]-hydrogen + (sulfur carrier)-H + 5'-deoxyadenosine + L-methionine + A + S-adenosyl-L-homocysteine + 2 H(+). Catalyzes the methylthiolation of an aspartic acid residue of ribosomal protein uS12. This Pseudomonas savastanoi pv. phaseolicola (strain 1448A / Race 6) (Pseudomonas syringae pv. phaseolicola (strain 1448A / Race 6)) protein is Ribosomal protein uS12 methylthiotransferase RimO.